The primary structure comprises 293 residues: Movement protein BC1 (293 aa).

This sequence belongs to the begomovirus movement protein BC1 family. Binds to dimeric supercoiled plasmid DNA. Post-translationally, phosphorylated.

The protein resides in the host cell membrane. The protein localises to the host microsome membrane. Its subcellular location is the host endoplasmic reticulum membrane. Functionally, transports viral genome to neighboring plant cells directly through plasmosdesmata, without any budding. The movement protein allows efficient cell to cell propagation, by bypassing the host cell wall barrier. Begomovirus genome is shuttled out of nucleus by Nuclear shuttle protein (NSP) and the movement protein transports the DNA-NSP complex to cell plasmodesmata and facilitates further movement across the cell wall. This is Movement protein BC1 from Potato yellow mosaic virus (isolate Venezuela) (PYMV).